The sequence spans 121 residues: Protein TCL1B5 (121 aa).

It belongs to the TCL1 family.

The polypeptide is Protein TCL1B5 (Tcl1b5) (Mus musculus (Mouse)).